The sequence spans 370 residues: Dual-specificity RNA methyltransferase RlmN (370 aa).

Glu93 acts as the Proton acceptor in catalysis. A Radical SAM core domain is found at 99–331; sequence DRKRGTLCVS…TRVRRTRGDD (233 aa). A disulfide bridge connects residues Cys106 and Cys336. Positions 113, 117, and 120 each coordinate [4Fe-4S] cluster. S-adenosyl-L-methionine-binding positions include 162 to 163, Ser194, 216 to 218, and Asn293; these read GE and SLH. The active-site S-methylcysteine intermediate is Cys336.

This sequence belongs to the radical SAM superfamily. RlmN family. [4Fe-4S] cluster is required as a cofactor.

Its subcellular location is the cytoplasm. It catalyses the reaction adenosine(2503) in 23S rRNA + 2 reduced [2Fe-2S]-[ferredoxin] + 2 S-adenosyl-L-methionine = 2-methyladenosine(2503) in 23S rRNA + 5'-deoxyadenosine + L-methionine + 2 oxidized [2Fe-2S]-[ferredoxin] + S-adenosyl-L-homocysteine. The catalysed reaction is adenosine(37) in tRNA + 2 reduced [2Fe-2S]-[ferredoxin] + 2 S-adenosyl-L-methionine = 2-methyladenosine(37) in tRNA + 5'-deoxyadenosine + L-methionine + 2 oxidized [2Fe-2S]-[ferredoxin] + S-adenosyl-L-homocysteine. Its function is as follows. Specifically methylates position 2 of adenine 2503 in 23S rRNA and position 2 of adenine 37 in tRNAs. m2A2503 modification seems to play a crucial role in the proofreading step occurring at the peptidyl transferase center and thus would serve to optimize ribosomal fidelity. In Coxiella burnetii (strain RSA 493 / Nine Mile phase I), this protein is Dual-specificity RNA methyltransferase RlmN.